Here is a 322-residue protein sequence, read N- to C-terminus: Methionyl-tRNA formyltransferase (322 aa).

113–116 (SLLP) contacts (6S)-5,6,7,8-tetrahydrofolate.

The protein belongs to the Fmt family.

The enzyme catalyses L-methionyl-tRNA(fMet) + (6R)-10-formyltetrahydrofolate = N-formyl-L-methionyl-tRNA(fMet) + (6S)-5,6,7,8-tetrahydrofolate + H(+). Functionally, attaches a formyl group to the free amino group of methionyl-tRNA(fMet). The formyl group appears to play a dual role in the initiator identity of N-formylmethionyl-tRNA by promoting its recognition by IF2 and preventing the misappropriation of this tRNA by the elongation apparatus. In Blochmanniella pennsylvanica (strain BPEN), this protein is Methionyl-tRNA formyltransferase.